The chain runs to 88 residues: MSRSIKKGVFLHKSLFLKIKNNKLENIKTWSRNSTIIPDMIGININIHNGKLFKKVFIVEDMIGCKLGEFSFTRKFKSHSKKIKRKKK.

It belongs to the universal ribosomal protein uS19 family.

Its function is as follows. Protein S19 forms a complex with S13 that binds strongly to the 16S ribosomal RNA. This is Small ribosomal subunit protein uS19 from Carsonella ruddii (strain PV).